The primary structure comprises 589 residues: L-fucose isomerase (589 aa).

Residues E340 and D364 each act as proton acceptor in the active site. Residues E340, D364, and H527 each contribute to the Mn(2+) site.

It belongs to the L-fucose isomerase family. The cofactor is Mn(2+).

Its subcellular location is the cytoplasm. It carries out the reaction L-fucose = L-fuculose. The protein operates within carbohydrate degradation; L-fucose degradation; L-lactaldehyde and glycerone phosphate from L-fucose: step 1/3. Converts the aldose L-fucose into the corresponding ketose L-fuculose. The sequence is that of L-fucose isomerase from Haemophilus influenzae (strain ATCC 51907 / DSM 11121 / KW20 / Rd).